The primary structure comprises 301 residues: Nucleotide-binding protein MAB_2783c (301 aa).

24-31 (GLSGAGRG) provides a ligand contact to ATP. 75–78 (DVRS) is a binding site for GTP.

The protein belongs to the RapZ-like family.

In terms of biological role, displays ATPase and GTPase activities. This is Nucleotide-binding protein MAB_2783c from Mycobacteroides abscessus (strain ATCC 19977 / DSM 44196 / CCUG 20993 / CIP 104536 / JCM 13569 / NCTC 13031 / TMC 1543 / L948) (Mycobacterium abscessus).